A 498-amino-acid chain; its full sequence is Heat stress transcription factor A-3 (498 aa).

The disordered stretch occupies residues 156 to 180 (RRRSSPTQQSGLQPGSSGESGLDPE). Residues 160 to 174 (SPTQQSGLQPGSSGE) show a composition bias toward polar residues. Positions 180-235 (ELNTLRREKSALLQEVTRLKQEHLQTIEQMSTLNQRLESAEDRQKQMVSFLAKLLQ) form a coiled coil. The tract at residues 184–234 (LRREKSALLQEVTRLKQEHLQTIEQMSTLNQRLESAEDRQKQMVSFLAKLL) is hydrophobic repeat HR-A/B. The short motif at 258-263 (KRKFLK) is the Nuclear localization signal element. Residues 263 to 291 (KHVPHGNIDSGESSSQHTGESNLDFSPTS) are disordered. The span at 272-291 (SGESSSQHTGESNLDFSPTS) shows a compositional bias: polar residues. The Nuclear export signal motif lies at 309 to 316 (LEDGDLNL). The interval 356–382 (LEIPPASGPRGQDPTIGRSKGKNVLSP) is disordered.

The protein belongs to the HSF family. Class A subfamily. In terms of assembly, homotrimer. Post-translationally, exhibits temperature-dependent phosphorylation.

The protein localises to the cytoplasm. It localises to the nucleus. Functionally, transcriptional regulator that specifically binds DNA of heat shock promoter elements (HSE). This chain is Heat stress transcription factor A-3 (HSFA3), found in Oryza sativa subsp. japonica (Rice).